Reading from the N-terminus, the 491-residue chain is E3 ubiquitin-protein ligase Hakai (491 aa).

Disordered regions lie at residues 1 to 20 and 33 to 61; these read MDHT…LGGL and KQAS…GDEE. An RING-type zinc finger spans residues 109 to 149; sequence CDKCGLPIKVYGRMIPCKHVFCYDCAILHEKKGDKMCPGCS. The tract at residues 148–206 is HYB domain; sequence CSDPVQRIEQCTRGSLFMCSIVQGCKRTYLSQRDLQAHINHRHMRAGKPVTRASLENVH. The segment at 164 to 190 adopts a C2H2-type zinc-finger fold; the sequence is FMCSIVQGCKRTYLSQRDLQAHINHRH. S201, S285, and S290 each carry phosphoserine. Positions 255-491 are disordered; sequence QPHEDIRAPP…DQTRYRPYYQ (237 aa). Pro residues-rich tracts occupy residues 342–359, 372–389, and 399–423; these read APPP…PHPP, APPP…PPPG, and MNHP…PPHH. Over residues 427–442 the composition is skewed to polar residues; that stretch reads NSLPQFTEDQGTLSPP. Pro residues predominate over residues 457-478; sequence PRGPPPPPRMQGPPSQTPLPGP.

This sequence belongs to the Hakai family. Homodimer. Interacts with tyrosine-phosphorylated SRC substrates. Component of the WMM complex, a N6-methyltransferase complex composed of a catalytic subcomplex, named MAC, and of an associated subcomplex, named MACOM. The MAC subcomplex is composed of METTL3 and METTL14. The MACOM subcomplex is composed of WTAP, ZC3H13, CBLL1/HAKAI, VIRMA, and, in some cases of RBM15 (RBM15 or RBM15B). Also a component of a MACOM-like complex, named WTAP complex, composed of WTAP, ZC3H13, CBLL1, VIRMA, RBM15, BCLAF1 and THRAP3. Phosphorylated on tyrosine residues. Detected in heart, brain, spleen, lung, liver, skeletal muscle, kidney and testis.

Its subcellular location is the nucleus speckle. The protein resides in the nucleus. It is found in the nucleoplasm. The protein localises to the cytoplasm. It carries out the reaction S-ubiquitinyl-[E2 ubiquitin-conjugating enzyme]-L-cysteine + [acceptor protein]-L-lysine = [E2 ubiquitin-conjugating enzyme]-L-cysteine + N(6)-ubiquitinyl-[acceptor protein]-L-lysine.. It functions in the pathway protein modification; protein ubiquitination. In terms of biological role, E3 ubiquitin-protein ligase that mediates ubiquitination of several tyrosine-phosphorylated Src substrates, including CDH1, CTTN and DOK1. Targets CDH1 for endocytosis and degradation. Associated component of the WMM complex, a complex that mediates N6-methyladenosine (m6A) methylation of RNAs, a modification that plays a role in the efficiency of mRNA splicing and RNA processing. Its function in the WMM complex is unknown. This chain is E3 ubiquitin-protein ligase Hakai, found in Mus musculus (Mouse).